Here is a 155-residue protein sequence, read N- to C-terminus: MKIIEGGLAAPQAQIAIVISRFNSFINEQLLAGAIDTLKRTGQVADDNITVVRVPGAVELPLVAKRVAASKKFDAIIALGTVIRGGTPHFEFVAGECNKGLGQVSMDFDIPVSFGVLTTDSIEQAIERAGTKMGNKGSEAALSALEMVNVMAEFK.

5-amino-6-(D-ribitylamino)uracil-binding positions include Phe-22, Ala-57–Glu-59, and Thr-81–Ile-83. Gly-86 to Thr-87 lines the (2S)-2-hydroxy-3-oxobutyl phosphate pocket. His-89 (proton donor) is an active-site residue. Position 114 (Phe-114) interacts with 5-amino-6-(D-ribitylamino)uracil. Arg-128 is a (2S)-2-hydroxy-3-oxobutyl phosphate binding site.

The protein belongs to the DMRL synthase family. Forms an icosahedral capsid composed of 60 subunits, arranged as a dodecamer of pentamers.

The enzyme catalyses (2S)-2-hydroxy-3-oxobutyl phosphate + 5-amino-6-(D-ribitylamino)uracil = 6,7-dimethyl-8-(1-D-ribityl)lumazine + phosphate + 2 H2O + H(+). Its pathway is cofactor biosynthesis; riboflavin biosynthesis; riboflavin from 2-hydroxy-3-oxobutyl phosphate and 5-amino-6-(D-ribitylamino)uracil: step 1/2. Functionally, catalyzes the formation of 6,7-dimethyl-8-ribityllumazine by condensation of 5-amino-6-(D-ribitylamino)uracil with 3,4-dihydroxy-2-butanone 4-phosphate. This is the penultimate step in the biosynthesis of riboflavin. The protein is 6,7-dimethyl-8-ribityllumazine synthase of Psychromonas ingrahamii (strain DSM 17664 / CCUG 51855 / 37).